The sequence spans 161 residues: uncharacterized protein (161 aa).

The N-terminal stretch at 1 to 35 (MVMAMGFDTVVAAIMATAIIVAVAYTFLAGSTSIA) is a signal peptide.

This is an uncharacterized protein from Archaeoglobus fulgidus (strain ATCC 49558 / DSM 4304 / JCM 9628 / NBRC 100126 / VC-16).